We begin with the raw amino-acid sequence, 365 residues long: NAD(P)H-quinone oxidoreductase subunit 1, chloroplastic (365 aa).

6 consecutive transmembrane segments (helical) span residues 30–50 (LVPILTLVLGITIGILVIVWL), 104–124 (IAVISTLLSYSVIPFGYHFVL), 129–149 (IGVFLWIAISSIAPIGLLMSG), 253–273 (FGLFYVASYLNLLVSSLFVAV), 302–322 (VFGTTMGILITLVKTYLFLFI), and 338–358 (LLNLGWKFLLPISLGNLLLTT).

Belongs to the complex I subunit 1 family. NDH is composed of at least 16 different subunits, 5 of which are encoded in the nucleus.

It localises to the plastid. It is found in the chloroplast thylakoid membrane. It carries out the reaction a plastoquinone + NADH + (n+1) H(+)(in) = a plastoquinol + NAD(+) + n H(+)(out). The catalysed reaction is a plastoquinone + NADPH + (n+1) H(+)(in) = a plastoquinol + NADP(+) + n H(+)(out). Its function is as follows. NDH shuttles electrons from NAD(P)H:plastoquinone, via FMN and iron-sulfur (Fe-S) centers, to quinones in the photosynthetic chain and possibly in a chloroplast respiratory chain. The immediate electron acceptor for the enzyme in this species is believed to be plastoquinone. Couples the redox reaction to proton translocation, and thus conserves the redox energy in a proton gradient. This is NAD(P)H-quinone oxidoreductase subunit 1, chloroplastic from Populus trichocarpa (Western balsam poplar).